Here is an 89-residue protein sequence, read N- to C-terminus: Acyl-CoA-binding protein (89 aa).

An ACB domain is found at Leu-3 to Ser-88. An acyl-CoA is bound by residues Tyr-30 to Lys-34, Lys-56, and Tyr-75.

This sequence belongs to the ACBP family.

Functionally, binds medium- and long-chain acyl-CoA esters with very high affinity and may function as an intracellular carrier of acyl-CoA esters. This chain is Acyl-CoA-binding protein, found in Gossypium hirsutum (Upland cotton).